Here is a 157-residue protein sequence, read N- to C-terminus: MLWVSRSVLRLGLGFTTHRAPQIISRWPRWGPRVACHPCSSSGQNPSGFEPPEKVHRIPAQYKPSKFDKKILLWTGRFKSIEDIPPLVPPEMIAVSRNKARVKACYIMIGLTIVACFAVIVSAKRAVERHESLTSWNLAKKAKWREEAALAAQSKSK.

Residues 104 to 123 form a helical membrane-spanning segment; that stretch reads ACYIMIGLTIVACFAVIVSA.

The protein belongs to the UPF0389 family.

Its subcellular location is the membrane. The polypeptide is Protein FAM162B (Fam162b) (Mus musculus (Mouse)).